Here is a 301-residue protein sequence, read N- to C-terminus: GTPase Era (301 aa).

One can recognise an Era-type G domain in the interval 8-174 (KSGFVALVGR…LKTLKDYLPE (167 aa)). Residues 16–23 (GRPNVGKS) form a G1 region. 16 to 23 (GRPNVGKS) is a binding site for GTP. The interval 42 to 46 (QTTRN) is G2. The G3 stretch occupies residues 63-66 (DTPG). GTP contacts are provided by residues 63-67 (DTPGI) and 124-127 (NKID). The G4 stretch occupies residues 124–127 (NKID). The interval 153–155 (ISA) is G5. Residues 197–282 (IREQILRLTD…NLKLWVKVRR (86 aa)) form the KH type-2 domain.

It belongs to the TRAFAC class TrmE-Era-EngA-EngB-Septin-like GTPase superfamily. Era GTPase family. As to quaternary structure, monomer.

It localises to the cytoplasm. It is found in the cell membrane. Functionally, an essential GTPase that binds both GDP and GTP, with rapid nucleotide exchange. Plays a role in 16S rRNA processing and 30S ribosomal subunit biogenesis and possibly also in cell cycle regulation and energy metabolism. The protein is GTPase Era of Lactobacillus delbrueckii subsp. bulgaricus (strain ATCC 11842 / DSM 20081 / BCRC 10696 / JCM 1002 / NBRC 13953 / NCIMB 11778 / NCTC 12712 / WDCM 00102 / Lb 14).